A 1072-amino-acid polypeptide reads, in one-letter code: Integrator complex subunit 3 homolog (1072 aa).

Disordered regions lie at residues Tyr-920–Ile-941 and Asp-1002–Asp-1072. Phosphoserine occurs at positions 1042, 1043, 1047, and 1048.

It belongs to the Integrator subunit 3 family. In terms of assembly, belongs to the multiprotein complex Integrator, at least composed of IntS1, IntS2, IntS3, IntS4, omd/IntS5, IntS6, defl/IntS7, IntS8, IntS9, IntS10, IntS11, IntS12, asun/IntS13, IntS14 and IntS15. The core complex associates with protein phosphatase 2A subunits mts/PP2A and Pp2A-29B, to form the Integrator-PP2A (INTAC) complex.

It is found in the nucleus. The protein localises to the cytoplasm. In terms of biological role, component of the integrator complex, a multiprotein complex that terminates RNA polymerase II (Pol II) transcription in the promoter-proximal region of genes. The integrator complex provides a quality checkpoint during transcription elongation by driving premature transcription termination of transcripts that are unfavorably configured for transcriptional elongation: the complex terminates transcription by (1) catalyzing dephosphorylation of the C-terminal domain (CTD) of Pol II subunit Polr2A/Rbp1 and Spt5, and (2) degrading the exiting nascent RNA transcript via endonuclease activity. The integrator complex is also involved in the 3'-end processing of the U7 snRNA, and also the spliceosomal snRNAs U1, U2, U4 and U5. This is Integrator complex subunit 3 homolog (IntS3) from Drosophila erecta (Fruit fly).